A 238-amino-acid chain; its full sequence is Complement C1q-like protein 4 (238 aa).

Positions 1-15 are cleaved as a signal peptide; that stretch reads MVLLLLVAIPLLVHS. A disordered region spans residues 37-102; that stretch reads SRGQGPDGAP…PGPGPGGAAP (66 aa). In terms of domain architecture, Collagen-like spans 53–96; it reads PPGAKGEVGRRGKAGLRGPPGPPGPRGPPGEPGRPGPPGPPGPG. Residues 71-96 show a composition bias toward pro residues; the sequence is PPGPPGPRGPPGEPGRPGPPGPPGPG. Positions 105 to 238 constitute a C1q domain; it reads GYVPRIAFYA…TFSGFIIYPD (134 aa).

Forms homooligomers, predominantly dimers or trimers. Forms heterooligomers with C1QL1, C1QL2 and C1QL3, when proteins are coexpressed; this interaction does not occur after secretion. Interacts with ADGRB3. In terms of tissue distribution, highly expressed in testis and adipose tissue, brown adipose tissue expressing higher levels than subcutaneous and visceral white adipose tissue. In gonadal fat pad, expressed at lower levels in adipocytes than in the stromal vascular fraction (VSP), which contains preadipocytes, fibroblasts, endothelial cells and occasional immune cells. Expression exhibits sexually dimorphism, with higher levels in females than in males.

The protein localises to the secreted. May regulate the number of excitatory synapses that are formed on hippocampus neurons. Has no effect on inhibitory synapses. May inhibit adipocyte differentiation at an early stage of the process. This chain is Complement C1q-like protein 4 (C1ql4), found in Mus musculus (Mouse).